The following is a 237-amino-acid chain: Ribonuclease 3 (237 aa).

The RNase III domain maps to Val5–Gly136. Glu49 is a binding site for Mg(2+). The active site involves Asp53. Mg(2+) is bound by residues Asp122 and Glu125. Glu125 is a catalytic residue. The region spanning Asp163 to Gly232 is the DRBM domain. Residues Ile185–Gly208 show a composition bias toward basic and acidic residues. A disordered region spans residues Ile185 to Arg237. A compositionally biased stretch (low complexity) spans Gln216 to Glu231.

The protein belongs to the ribonuclease III family. Homodimer. Mg(2+) serves as cofactor.

It is found in the cytoplasm. It carries out the reaction Endonucleolytic cleavage to 5'-phosphomonoester.. Functionally, digests double-stranded RNA. Involved in the processing of primary rRNA transcript to yield the immediate precursors to the large and small rRNAs (23S and 16S). Processes some mRNAs, and tRNAs when they are encoded in the rRNA operon. Processes pre-crRNA and tracrRNA of type II CRISPR loci if present in the organism. This Roseiflexus sp. (strain RS-1) protein is Ribonuclease 3.